Here is a 1203-residue protein sequence, read N- to C-terminus: Kinesin-like protein KIN-14Q (1203 aa).

The interval 1 to 28 (MEDCCDPLLATDASPRPESFSRSEKDIA) is disordered. The segment covering 19–28 (SFSRSEKDIA) has biased composition (basic and acidic residues). A coiled-coil region spans residues 336-395 (ENLVCRAEEEAEGMRSDCEQQRKEMEDMKRMVEELKLENQQKTRECEEALNSLSEIQNEL). In terms of domain architecture, Kinesin motor spans 499–825 (NIRVFCRCRP…LNFASRVRGI (327 aa)). Residue 582-589 (GQTGTGKT) coordinates ATP. Residues 846–901 (VEKWKQDMKGKDEQIRKMEETMYGLEAKIKERDTKNKTLQDKVKELESQLLVERKL) adopt a coiled-coil conformation. A disordered region spans residues 907–931 (DTKIAEQQTKQQTEDENNTSKRPPL).

It belongs to the TRAFAC class myosin-kinesin ATPase superfamily. Kinesin family. KIN-14 subfamily.

This Arabidopsis thaliana (Mouse-ear cress) protein is Kinesin-like protein KIN-14Q.